Consider the following 179-residue polypeptide: Large ribosomal subunit protein uL6 (179 aa).

This sequence belongs to the universal ribosomal protein uL6 family. In terms of assembly, part of the 50S ribosomal subunit.

This protein binds to the 23S rRNA, and is important in its secondary structure. It is located near the subunit interface in the base of the L7/L12 stalk, and near the tRNA binding site of the peptidyltransferase center. This chain is Large ribosomal subunit protein uL6, found in Synechococcus elongatus (strain ATCC 33912 / PCC 7942 / FACHB-805) (Anacystis nidulans R2).